We begin with the raw amino-acid sequence, 500 residues long: Aromatic-L-amino-acid decarboxylase (500 aa).

Position 102 (Pro-102) interacts with L-tryptophan. Ser-168 lines the pyridoxal 5'-phosphate pocket. His-203 serves as a coordination point for L-tryptophan. Residue Thr-262 participates in pyridoxal 5'-phosphate binding. His-318 contacts L-tryptophan. Lys-319 is modified (N6-(pyridoxal phosphate)lysine). Residue Tyr-348 participates in L-tryptophan binding.

Belongs to the group II decarboxylase family. In terms of assembly, homodimer. Pyridoxal 5'-phosphate serves as cofactor.

It carries out the reaction L-tryptophan + H(+) = tryptamine + CO2. The catalysed reaction is 5-hydroxy-L-tryptophan + H(+) = serotonin + CO2. Catalyzes the decarboxylation of L-tryptophan to tryptamine and L-5-hydroxytryptophan to serotonin, respectively. The protein is Aromatic-L-amino-acid decarboxylase of Catharanthus roseus (Madagascar periwinkle).